Reading from the N-terminus, the 185-residue chain is Serine/arginine-rich splicing factor RSZ21A (185 aa).

In terms of domain architecture, RRM spans 2 to 73; that stretch reads ARVYVGNLDP…WRVELSRNAS (72 aa). The CCHC-type zinc-finger motif lies at 87-104; that stretch reads SKCYECGETGHFARECRL. Residues 109–185 form a disordered region; the sequence is GGLGSGRRRS…YDNGYRRSRS (77 aa). Residues 114–131 show a composition bias toward basic residues; it reads GRRRSRSRSRSRSPRYRR. Low complexity-rich tracts occupy residues 132-145 and 152-163; these read SPSY…PAGR and VSPARARSYSRS.

This sequence belongs to the splicing factor SR family. Post-translationally, extensively phosphorylated on serine residues in the RS domain. Expressed in roots, leaves and immature seeds.

The protein resides in the nucleus. Involved in pre-mRNA splicing. This is Serine/arginine-rich splicing factor RSZ21A (RSZ21A) from Oryza sativa subsp. japonica (Rice).